The following is a 366-amino-acid chain: Carboxy-cis,cis-muconate cyclase (366 aa).

Active-site residues include His149, Arg197, Glu213, and Arg275.

The protein belongs to the cycloisomerase 2 family. As to quaternary structure, homotetramer.

It catalyses the reaction 3-carboxy-2,5-dihydro-5-oxofuran-2-acetate = 3-carboxy-cis,cis-muconate. It participates in aromatic compound metabolism; beta-ketoadipate pathway; 3-carboxy-cis,cis-muconate from 3-carboxy-2,5-dihydro-5-oxofuran-2-acetate: step 1/1. Functionally, catalyzes a syn cycloisomerization. Also possesses mle activity. The chain is Carboxy-cis,cis-muconate cyclase from Neurospora crassa (strain ATCC 24698 / 74-OR23-1A / CBS 708.71 / DSM 1257 / FGSC 987).